The chain runs to 209 residues: Orotate phosphoribosyltransferase (209 aa).

5-phospho-alpha-D-ribose 1-diphosphate-binding positions include arginine 98, lysine 102, histidine 104, and 124-132 (EDLISTGKS). An orotate-binding site is contributed by serine 128.

The protein belongs to the purine/pyrimidine phosphoribosyltransferase family. PyrE subfamily. Homodimer. The cofactor is Mg(2+).

It catalyses the reaction orotidine 5'-phosphate + diphosphate = orotate + 5-phospho-alpha-D-ribose 1-diphosphate. Its pathway is pyrimidine metabolism; UMP biosynthesis via de novo pathway; UMP from orotate: step 1/2. Functionally, catalyzes the transfer of a ribosyl phosphate group from 5-phosphoribose 1-diphosphate to orotate, leading to the formation of orotidine monophosphate (OMP). The protein is Orotate phosphoribosyltransferase of Malacoplasma penetrans (strain HF-2) (Mycoplasma penetrans).